Here is a 213-residue protein sequence, read N- to C-terminus: Proton-translocating ferredoxin:NAD(+) oxidoreductase complex subunit E (213 aa).

The next 6 helical transmembrane spans lie at 11–31, 39–59, 69–89, 93–113, 128–148, and 170–190; these read GLIA…ALAT, FTMG…VSII, VPVY…VMQA, LLYK…IILA, FFDG…IGMI, and ALIM…VAIV.

This sequence belongs to the NqrDE/RnfAE family. In terms of assembly, the complex is composed of six subunits: RnfA, RnfB, RnfC, RnfD, RnfE and RnfG.

It localises to the cell membrane. Part of a membrane-bound complex that couples electron transfer with translocation of ions across the membrane. Couples electron transfer from reduced ferredoxin to NAD(+) with translocation of H(+) out of the cell. Essential for energy conservation during autotrophic growth. Contributes to ATP synthesis during heterotrophic growth. This is Proton-translocating ferredoxin:NAD(+) oxidoreductase complex subunit E from Clostridium ljungdahlii (strain ATCC 55383 / DSM 13528 / PETC).